The chain runs to 377 residues: Chaperone protein DnaJ (377 aa).

The 66-residue stretch at 4-69 (DYYEALGVER…QKRAAYDRFG (66 aa)) folds into the J domain. Residues 135–213 (GKTAQIRVPT…CHGQGRVTQE (79 aa)) form a CR-type zinc finger. Zn(2+) is bound by residues Cys148, Cys151, Cys165, Cys168, Cys187, Cys190, Cys201, and Cys204. CXXCXGXG motif repeat units follow at residues 148-155 (CDECSGSG), 165-172 (CTMCSGSG), 187-194 (CPTCNGRG), and 201-208 (CGKCHGQG).

This sequence belongs to the DnaJ family. In terms of assembly, homodimer. Zn(2+) serves as cofactor.

It localises to the cytoplasm. Its function is as follows. Participates actively in the response to hyperosmotic and heat shock by preventing the aggregation of stress-denatured proteins and by disaggregating proteins, also in an autonomous, DnaK-independent fashion. Unfolded proteins bind initially to DnaJ; upon interaction with the DnaJ-bound protein, DnaK hydrolyzes its bound ATP, resulting in the formation of a stable complex. GrpE releases ADP from DnaK; ATP binding to DnaK triggers the release of the substrate protein, thus completing the reaction cycle. Several rounds of ATP-dependent interactions between DnaJ, DnaK and GrpE are required for fully efficient folding. Also involved, together with DnaK and GrpE, in the DNA replication of plasmids through activation of initiation proteins. This chain is Chaperone protein DnaJ, found in Brucella anthropi (strain ATCC 49188 / DSM 6882 / CCUG 24695 / JCM 21032 / LMG 3331 / NBRC 15819 / NCTC 12168 / Alc 37) (Ochrobactrum anthropi).